The primary structure comprises 216 residues: Adenylate kinase (216 aa).

10 to 15 (GAGKGT) lines the ATP pocket. The NMP stretch occupies residues 30–59 (STGDMLRAAVAAGTEVGKRAKAVMDAGKLV). AMP-binding positions include threonine 31, arginine 36, 57 to 59 (KLV), 85 to 88 (GFPR), and glutamine 92. Positions 126–163 (GRYTCANCGAGYHDENLRPKVEGVCDRCGSTHFKRRAD) are LID. Position 127 (arginine 127) interacts with ATP. Cysteine 130, cysteine 133, cysteine 150, and cysteine 153 together coordinate Zn(2+). 2 residues coordinate AMP: arginine 160 and arginine 172. An ATP-binding site is contributed by alanine 200.

It belongs to the adenylate kinase family. As to quaternary structure, monomer.

Its subcellular location is the cytoplasm. It carries out the reaction AMP + ATP = 2 ADP. Its pathway is purine metabolism; AMP biosynthesis via salvage pathway; AMP from ADP: step 1/1. Catalyzes the reversible transfer of the terminal phosphate group between ATP and AMP. Plays an important role in cellular energy homeostasis and in adenine nucleotide metabolism. In Rhizobium rhizogenes (strain K84 / ATCC BAA-868) (Agrobacterium radiobacter), this protein is Adenylate kinase.